A 309-amino-acid chain; its full sequence is Glutaminase (309 aa).

The substrate site is built by Ser-64, Asn-114, Glu-160, Asn-167, Tyr-191, Tyr-243, and Val-261.

This sequence belongs to the glutaminase family. In terms of assembly, homotetramer.

It catalyses the reaction L-glutamine + H2O = L-glutamate + NH4(+). This Rhizobium etli (strain CIAT 652) protein is Glutaminase.